A 181-amino-acid polypeptide reads, in one-letter code: Probable cobalt-precorrin-6B C(15)-methyltransferase (decarboxylating) (181 aa).

Residues Thr16, 40-44 (GCGSG), Asp61, and Ala89 contribute to the S-adenosyl-L-methionine site.

It belongs to the methyltransferase superfamily. Archaeal-type CbiT family.

The enzyme catalyses Co-precorrin-6B + S-adenosyl-L-methionine = Co-precorrin-7 + S-adenosyl-L-homocysteine + CO2. It participates in cofactor biosynthesis; adenosylcobalamin biosynthesis; cob(II)yrinate a,c-diamide from sirohydrochlorin (anaerobic route): step 8/10. Functionally, catalyzes the methylation of C-15 in cobalt-precorrin-6B followed by the decarboxylation of C-12 to form cobalt-precorrin-7. This is Probable cobalt-precorrin-6B C(15)-methyltransferase (decarboxylating) from Methanococcus maripaludis (strain DSM 14266 / JCM 13030 / NBRC 101832 / S2 / LL).